The primary structure comprises 454 residues: Pup--protein ligase (454 aa).

Glu9 contacts Mg(2+). Arg53 serves as a coordination point for ATP. Position 55 (Tyr55) interacts with Mg(2+). Residue Asp57 is the Proton acceptor of the active site. Mg(2+) is bound at residue Glu63. The ATP site is built by Thr66 and Trp420.

It belongs to the Pup ligase/Pup deamidase family. Pup-conjugating enzyme subfamily.

It carries out the reaction ATP + [prokaryotic ubiquitin-like protein]-L-glutamate + [protein]-L-lysine = ADP + phosphate + N(6)-([prokaryotic ubiquitin-like protein]-gamma-L-glutamyl)-[protein]-L-lysine.. It participates in protein degradation; proteasomal Pup-dependent pathway. Its pathway is protein modification; protein pupylation. In terms of biological role, catalyzes the covalent attachment of the prokaryotic ubiquitin-like protein modifier Pup to the proteasomal substrate proteins, thereby targeting them for proteasomal degradation. This tagging system is termed pupylation. The ligation reaction involves the side-chain carboxylate of the C-terminal glutamate of Pup and the side-chain amino group of a substrate lysine. This chain is Pup--protein ligase, found in Paenarthrobacter aurescens (strain TC1).